Reading from the N-terminus, the 268-residue chain is Thiazole synthase (268 aa).

K108 (schiff-base intermediate with DXP) is an active-site residue. 1-deoxy-D-xylulose 5-phosphate is bound by residues G169, 195 to 196 (AG), and 217 to 218 (NS). The segment at 248-268 (RLKENPLASPSSPLDGVISNN) is disordered. Polar residues predominate over residues 255 to 268 (ASPSSPLDGVISNN).

This sequence belongs to the ThiG family. In terms of assembly, homotetramer. Forms heterodimers with either ThiH or ThiS.

The protein localises to the cytoplasm. It catalyses the reaction [ThiS sulfur-carrier protein]-C-terminal-Gly-aminoethanethioate + 2-iminoacetate + 1-deoxy-D-xylulose 5-phosphate = [ThiS sulfur-carrier protein]-C-terminal Gly-Gly + 2-[(2R,5Z)-2-carboxy-4-methylthiazol-5(2H)-ylidene]ethyl phosphate + 2 H2O + H(+). It functions in the pathway cofactor biosynthesis; thiamine diphosphate biosynthesis. In terms of biological role, catalyzes the rearrangement of 1-deoxy-D-xylulose 5-phosphate (DXP) to produce the thiazole phosphate moiety of thiamine. Sulfur is provided by the thiocarboxylate moiety of the carrier protein ThiS. In vitro, sulfur can be provided by H(2)S. The polypeptide is Thiazole synthase (Prochlorococcus marinus (strain NATL2A)).